A 155-amino-acid polypeptide reads, in one-letter code: Small ribosomal subunit protein bS6 (155 aa).

Positions 94–155 are disordered; it reads EKHEEGPSAM…RPRRPREDRV (62 aa).

The protein belongs to the bacterial ribosomal protein bS6 family.

Binds together with bS18 to 16S ribosomal RNA. This chain is Small ribosomal subunit protein bS6, found in Rhizobium leguminosarum bv. trifolii (strain WSM2304).